The sequence spans 222 residues: UPF0758 protein YicR (222 aa).

One can recognise an MPN domain in the interval 100-222 (PLLSPEMTRE…YVSFAERGWI (123 aa)). The Zn(2+) site is built by H171, H173, and D184. Positions 171–184 (HNHPSGCAEPSKAD) match the JAMM motif motif.

This sequence belongs to the UPF0758 family. YicR subfamily.

The protein is UPF0758 protein YicR of Escherichia coli O45:K1 (strain S88 / ExPEC).